The primary structure comprises 115 residues: Histidine decarboxylase proenzyme (115 aa).

A Pyruvic acid (Ser) modification is found at S83.

In terms of assembly, the proenzyme is a hexamer of identical pi chains; each pi chain monomer is cleaved to form a small (or beta) chain and a large (or alpha) chain by non-hydrolytic self-catalysis. It depends on pyruvate as a cofactor.

It catalyses the reaction L-histidine + H(+) = histamine + CO2. The protein is Histidine decarboxylase proenzyme of Lentilactobacillus buchneri (Lactobacillus buchneri).